Reading from the N-terminus, the 143-residue chain is Mediator of RNA polymerase II transcription subunit 21 (143 aa).

A coiled-coil region spans residues 53 to 130; that stretch reads KEFEKNIDEL…KVRTLTQDFT (78 aa).

The protein belongs to the Mediator complex subunit 21 family. Component of the Mediator complex.

The protein localises to the nucleus. Component of the Mediator complex, a coactivator involved in the regulated transcription of nearly all RNA polymerase II-dependent genes. Mediator functions as a bridge to convey information from gene-specific regulatory proteins to the basal RNA polymerase II transcription machinery. Mediator is recruited to promoters by direct interactions with regulatory proteins and serves as a scaffold for the assembly of a functional preinitiation complex with RNA polymerase II and the general transcription factors. This chain is Mediator of RNA polymerase II transcription subunit 21 (SRB7), found in Kluyveromyces lactis (strain ATCC 8585 / CBS 2359 / DSM 70799 / NBRC 1267 / NRRL Y-1140 / WM37) (Yeast).